Consider the following 367-residue polypeptide: MYPESTTGSPARLSLRQTGSPGMIYSTRYGSPKRQLQFYRNLGKSGLRVSCLGLGTWVTFGGQITDEMAEHLMTLAYDNGINLFDTAEVYAAGKAEVVLGNIIKKKGWRRSSLVITTKIFWGGKAETERGLSRKHIIEGLKASLERLQLEYVDVVFANRPDPNTPMEETVRAMTHVINQGMAMYWGTSRWSSMEIMEAYSVARQFNLIPPICEQAEYHMFQREKVEVQLPELFHKIGVGAMTWSPLACGIVSGKYDSGIPPYSRASLKGYQWLKDKILSEEGRRQQAKLKELQAIAERLGCTLPQLAIAWCLRNEGVSSVLLGASNAEQLMENIGAIQVLPKLSSSIVHEIDSILGNKPYSKKDYRS.

Phosphoserine occurs at positions 9, 14, and 20. Arg-28 carries the asymmetric dimethylarginine; alternate modification. Position 28 is an omega-N-methylarginine; alternate (Arg-28). Ser-31 carries the phosphoserine modification. Thr-56, Trp-57, Gln-63, and Asp-85 together coordinate NADP(+). Tyr-90 serves as the catalytic Proton donor/acceptor. Ser-112 carries the post-translational modification Phosphoserine. Residue Lys-124 is modified to N6-acetyllysine. Positions 158, 188, 189, 214, 243, 244, 245, 246, 247, 248, 254, 262, 264, 323, 325, 329, 332, and 333 each coordinate NADP(+).

The protein belongs to the shaker potassium channel beta subunit family. In terms of assembly, homotetramer. Interaction with tetrameric potassium channel alpha subunits gives rise to a heterooctamer. Identified in potassium channel complexes containing KCNA1, KCNA2, KCNA4, KCNA5, KCNA6, KCNAB1, KCNAB2 and KCND3. Interacts (in unphosphorylated form) with MAPRE1. Forms a ternary complex with SQSTM1 and PRKCZ. Phosphorylated by PRKCZ; may be regulated by incorporation in a complex composed of PRKCZ and SQSTM1. Detected in brain. Detected at basket cell terminals in cerebellum and in the juxtaparanodal region of nodes of Ranvier (at protein level). Strongest expression in brain and eye. Highest levels in brain detected in brainstem and diencephalon. Strong expression also detected in lung and heart. Moderate expression in kidney, T-lymphocytes and skeletal muscle.

Its subcellular location is the cytoplasm. The protein resides in the membrane. It localises to the cell membrane. It is found in the cell projection. The protein localises to the axon. Its subcellular location is the synapse. The protein resides in the synaptosome. It localises to the cytoskeleton. The catalysed reaction is hydroxyacetone + NADP(+) = methylglyoxal + NADPH + H(+). The enzyme catalyses (E)-4-oxonon-2-en-1-ol + NADP(+) = (E)-4-oxonon-2-enal + NADPH + H(+). In terms of biological role, regulatory subunit of the voltage-gated potassium (Kv) Shaker channel family. Shaker channels are composed of pore-forming and potassium-conducting alpha subunits and of regulatory beta subunits. The beta-2/KCNAB2 subunit promotes potassium channel closure via a mechanism that does not involve physical obstruction of the channel pore. Promotes the inactivation of Kv1.4/KCNA4 and Kv1.5/KCNA5 alpha subunit-containing channels. Displays nicotinamide adenine dinucleotide phosphate (NADPH)-dependent aldoketoreductase activity by catalyzing the NADPH-dependent reduction of a wide range of aldehyde and ketone substrates. Substrate specificity includes methylglyoxal, 9,10-phenanthrenequinone, prostaglandin J2, 4-nitrobenzaldehyde, 4-nitroacetophenone and 4-oxo-trans-2-nonenal (in vitro, no physiological substrate identified yet). The binding of oxidized and reduced nucleotide cofactors alters Kv channel gating and may contribute to dynamic fine tuning of cell excitability. Contributes to the regulation of nerve signaling, and prevents neuronal hyperexcitability. This chain is Voltage-gated potassium channel subunit beta-2, found in Mus musculus (Mouse).